Consider the following 277-residue polypeptide: Large ribosomal subunit protein uL2 (277 aa).

Disordered stretches follow at residues 37–59 and 221–265; these read KNSTGGRNHNGHITTRHRGGGHK and RGTA…KRTD. Residues 50 to 59 show a composition bias toward basic residues; that stretch reads TTRHRGGGHK. Residues 229–241 are compositionally biased toward basic and acidic residues; that stretch reads DHPHGGGEGRTGE.

This sequence belongs to the universal ribosomal protein uL2 family. In terms of assembly, part of the 50S ribosomal subunit. Forms a bridge to the 30S subunit in the 70S ribosome.

One of the primary rRNA binding proteins. Required for association of the 30S and 50S subunits to form the 70S ribosome, for tRNA binding and peptide bond formation. It has been suggested to have peptidyltransferase activity; this is somewhat controversial. Makes several contacts with the 16S rRNA in the 70S ribosome. In Chromobacterium violaceum (strain ATCC 12472 / DSM 30191 / JCM 1249 / CCUG 213 / NBRC 12614 / NCIMB 9131 / NCTC 9757 / MK), this protein is Large ribosomal subunit protein uL2.